A 234-amino-acid chain; its full sequence is BTB/POZ domain-containing protein KCTD5 (234 aa).

Ala2 bears the N-acetylalanine mark. In terms of domain architecture, BTB spans Lys44 to Asp146. The tract at residues Pro213–Met234 is disordered. Positions Pro220–Met234 are enriched in basic and acidic residues.

In terms of assembly, homopentamer. Interacts (via C-terminus) with GRASP55/GORASP2. Interacts with CUL3 and with ubiquitinated proteins. Interacts with CRY1.

It is found in the cytoplasm. The protein resides in the cytosol. It localises to the nucleus. Functionally, its interaction with CUL3 suggests that it may act as a substrate adapter in some E3 ligase complex. Does not affect the function of Kv channel Kv2.1/KCNB1, Kv1.2/KCNA2, Kv4.2/KCND2 and Kv3.4/KCNC4. This is BTB/POZ domain-containing protein KCTD5 (Kctd5) from Mus musculus (Mouse).